The following is a 485-amino-acid chain: MTITPQHLIALLPLLIVGLTVVVVMLSIAWRRNHFLNATLSVIGLNAALVSLWFVGQAGAMDVTPLMRVDGFAMLYTGLVLLASLATCTFAYPWLEGYNDNQEEFYLLVLIASLGGILLANANHLAALFLGIELISLPLFGLIGYAFRQKRSLEASIKYTILSAAASSFLLFGMALVYAQSGNLSFEALGKSLGDGMLHEPLLLAGFGLMIVGLGFKLSLVPFHLWTPDVYQGAPAPVSTFLATASKIAIFGVVMRLFLYAPVGDSEAVRVVLGIIAFASIIFGNLMALSQTNIKRLLGYSSISHLGYLLVALIVLQSGEMSMEAVGVYLAGYLFSSLGAFGVVSLMSSPFRGPDADSLYSYRGLFWHRPVLAAVMTVMMLSLAGIPMTLGFIGKFYVLAVGVQASLWWLVAAVVVGSAIGLYYYLRVAVSLYLHAPQQPGRDAPTNWQYSAGGIVVLISALLVLVLGVWPQPLISLVQLAMPLM.

The next 14 membrane-spanning stretches (helical) occupy residues 8-28 (LIALLPLLIVGLTVVVVMLSI), 35-55 (FLNATLSVIGLNAALVSLWFV), 71-91 (GFAMLYTGLVLLASLATCTFA), 105-125 (FYLLVLIASLGGILLANANHL), 127-147 (ALFLGIELISLPLFGLIGYAF), 159-179 (YTILSAAASSFLLFGMALVYA), 203-223 (LLAGFGLMIVGLGFKLSLVPF), 235-255 (PAPVSTFLATASKIAIFGVVM), 271-291 (VVLGIIAFASIIFGNLMALSQ), 297-317 (LLGYSSISHLGYLLVALIVLQ), 326-346 (VGVYLAGYLFSSLGAFGVVSL), 373-393 (AAVMTVMMLSLAGIPMTLGFI), 408-430 (WWLVAAVVVGSAIGLYYYLRVAV), and 455-475 (IVVLISALLVLVLGVWPQPLI).

Belongs to the complex I subunit 2 family. As to quaternary structure, NDH-1 is composed of 13 different subunits. Subunits NuoA, H, J, K, L, M, N constitute the membrane sector of the complex.

Its subcellular location is the cell inner membrane. The enzyme catalyses a quinone + NADH + 5 H(+)(in) = a quinol + NAD(+) + 4 H(+)(out). In terms of biological role, NDH-1 shuttles electrons from NADH, via FMN and iron-sulfur (Fe-S) centers, to quinones in the respiratory chain. The immediate electron acceptor for the enzyme in this species is believed to be ubiquinone. Couples the redox reaction to proton translocation (for every two electrons transferred, four hydrogen ions are translocated across the cytoplasmic membrane), and thus conserves the redox energy in a proton gradient. In Salmonella choleraesuis (strain SC-B67), this protein is NADH-quinone oxidoreductase subunit N.